We begin with the raw amino-acid sequence, 214 residues long: 3-isopropylmalate dehydratase small subunit (214 aa).

This sequence belongs to the LeuD family. LeuD type 1 subfamily. As to quaternary structure, heterodimer of LeuC and LeuD.

It carries out the reaction (2R,3S)-3-isopropylmalate = (2S)-2-isopropylmalate. It functions in the pathway amino-acid biosynthesis; L-leucine biosynthesis; L-leucine from 3-methyl-2-oxobutanoate: step 2/4. Catalyzes the isomerization between 2-isopropylmalate and 3-isopropylmalate, via the formation of 2-isopropylmaleate. This chain is 3-isopropylmalate dehydratase small subunit, found in Pseudomonas putida (strain W619).